The primary structure comprises 98 residues: N(2)-fixation sustaining protein CowN (98 aa).

This sequence belongs to the CowN family.

In terms of biological role, is required to sustain N(2)-dependent growth in the presence of low levels of carbon monoxide (CO). Probably acts by protecting the N(2) fixation ability of the nitrogenase complex, which is inactivated in the presence of CO. The sequence is that of N(2)-fixation sustaining protein CowN from Paramagnetospirillum magneticum (strain ATCC 700264 / AMB-1) (Magnetospirillum magneticum).